The following is a 178-amino-acid chain: Large ribosomal subunit protein bL17 (178 aa).

Residues 150–178 (PADEPVVAEENAPQSAVKDAVDECEGKAD) form a disordered region. The span at 168-178 (DAVDECEGKAD) shows a compositional bias: basic and acidic residues.

It belongs to the bacterial ribosomal protein bL17 family. As to quaternary structure, part of the 50S ribosomal subunit. Contacts protein L32.

This is Large ribosomal subunit protein bL17 from Geobacter metallireducens (strain ATCC 53774 / DSM 7210 / GS-15).